We begin with the raw amino-acid sequence, 302 residues long: Putative peptide permease protein BOV_A0350 (302 aa).

A disordered region spans residues 1-22; it reads MRSSIHASRLRKMGQSIPASTG. A run of 6 helical transmembrane segments spans residues 38–58, 101–121, 147–167, 200–222, 230–250, and 268–288; these read IFGL…PLWL, LLVA…IGAI, IFLL…VVVI, AGLG…VVYA, ILLE…AASW, and WQWL…NFIG. Residues 97–288 form the ABC transmembrane type-1 domain; the sequence is GRISLLVAVS…LAVLAINFIG (192 aa).

It belongs to the binding-protein-dependent transport system permease family. As to quaternary structure, the complex is composed of two ATP-binding proteins (BOV_A0347 and BOV_A0348), two transmembrane proteins (BOV_A0350 and BOV_A0351) and a solute-binding protein (BOV_A0352).

The protein localises to the cell inner membrane. In terms of biological role, probably part of an ABC transporter complex that could be involved in peptide import. Probably responsible for the translocation of the substrate across the membrane. This chain is Putative peptide permease protein BOV_A0350, found in Brucella ovis (strain ATCC 25840 / 63/290 / NCTC 10512).